A 431-amino-acid polypeptide reads, in one-letter code: MVVQNSPVSSVHTANFSERGSNTRTMTYKNKLTVCFDDILKVGAEMMMQQQLKNVQLDSYLVNGFSQSQQKLLKEKVKLFHGILDDLETSLSQSSSYLETLTALGKEKEKEREEAEKKRAEQENMRKVREQEELKKRQELEEASQQQQLQQNSKEKNGLGLNFSTTAPANTTDANGSKENYQELGSLQSSSQTQLENANAANNGAAFSPLTTTRIQSQQAQPSDVMFNDLNSMDISMFSGLDSTGFDSTAFNATVDETKGFDDNDSGNNYNDINISSIENNINNNINSTKNGKDNNNESNKNNNGDEKNKNNNEDNENNNNSSEKNNNNNNNNNNNNDDNGNNNNNNSGNDNNNTTNNDSNNKNNSITTGNDNENIVNNDLPTTVVSNPGDNPPPADNGEEYLTLNDFNDLNIDWSTTGDNGELDLSGFNI.

Ser-6 is modified (phosphoserine). Residues 105-140 (GKEKEKEREEAEKKRAEQENMRKVREQEELKKRQEL) show a composition bias toward basic and acidic residues. The interval 105–178 (GKEKEKEREE…ANTTDANGSK (74 aa)) is disordered. Residues 143-152 (ASQQQQLQQN) show a composition bias toward low complexity. The segment covering 162–178 (NFSTTAPANTTDANGSK) has biased composition (polar residues). Phosphoserine; by CDK8 is present on Ser-208. The tract at residues 284-399 (NNINSTKNGK…GDNPPPADNG (116 aa)) is disordered. Positions 304 to 313 (NGDEKNKNNN) are enriched in basic and acidic residues. Over residues 318–365 (NNNNSSEKNNNNNNNNNNNNDDNGNNNNNNSGNDNNNTTNNDSNNKNN) the composition is skewed to low complexity. Positions 366-387 (SITTGNDNENIVNNDLPTTVVS) are enriched in polar residues.

It belongs to the mediator complex subunit 2 family. Component of the Mediator complex, which is composed of at least 21 subunits that form three structurally distinct submodules. The Mediator head module contains MED6, MED8, MED11, SRB4/MED17, SRB5/MED18, ROX3/MED19, SRB2/MED20 and SRB6/MED22, the middle module contains MED1, MED4, NUT1/MED5, MED7, CSE2/MED9, NUT2/MED10, SRB7/MED21 and SOH1/MED31, and the tail module contains MED2, PGD1/MED3, RGR1/MED14, GAL11/MED15 and SIN4/MED16. The head and the middle modules interact directly with RNA polymerase II, whereas the elongated tail module interacts with gene-specific regulatory proteins.

The protein localises to the nucleus. Its function is as follows. Component of the Mediator complex, a coactivator involved in the regulated transcription of nearly all RNA polymerase II-dependent genes. Mediator functions as a bridge to convey information from gene-specific regulatory proteins to the basal RNA polymerase II transcription machinery. The Mediator complex, having a compact conformation in its free form, is recruited to promoters by direct interactions with regulatory proteins and serves for the assembly of a functional preinitiation complex with RNA polymerase II and the general transcription factors. The Mediator complex unfolds to an extended conformation and partially surrounds RNA polymerase II, specifically interacting with the unphosphorylated form of the C-terminal domain (CTD) of RNA polymerase II. The Mediator complex dissociates from the RNA polymerase II holoenzyme and stays at the promoter when transcriptional elongation begins. The chain is Mediator of RNA polymerase II transcription subunit 2 (MED2) from Saccharomyces cerevisiae (strain ATCC 204508 / S288c) (Baker's yeast).